The following is a 98-amino-acid chain: MASINLNIIMAFIMALMGVLIYRSHLMSTLLCLEGMMLSLFILVTLLISQSHMLTTSMMPLILLVFSACEAGVGLALLVTISTTYGNDHVQNLNLLQC.

3 helical membrane-spanning segments follow: residues 1-21, 28-48, and 61-81; these read MASINLNIIMAFIMALMGVLI, STLLCLEGMMLSLFILVTLLI, and LILLVFSACEAGVGLALLVTI.

Belongs to the complex I subunit 4L family. In terms of assembly, core subunit of respiratory chain NADH dehydrogenase (Complex I) which is composed of 45 different subunits.

Its subcellular location is the mitochondrion inner membrane. The catalysed reaction is a ubiquinone + NADH + 5 H(+)(in) = a ubiquinol + NAD(+) + 4 H(+)(out). Its function is as follows. Core subunit of the mitochondrial membrane respiratory chain NADH dehydrogenase (Complex I) which catalyzes electron transfer from NADH through the respiratory chain, using ubiquinone as an electron acceptor. Part of the enzyme membrane arm which is embedded in the lipid bilayer and involved in proton translocation. The polypeptide is NADH-ubiquinone oxidoreductase chain 4L (MT-ND4L) (Thylamys elegans (Elegant fat-tailed mouse opossum)).